Consider the following 232-residue polypeptide: Phosphatidylserine decarboxylase proenzyme (232 aa).

The active-site Schiff-base intermediate with substrate; via pyruvic acid is the Ser190. Ser190 bears the Pyruvic acid (Ser); by autocatalysis mark.

It belongs to the phosphatidylserine decarboxylase family. PSD-A subfamily. Heterodimer of a large membrane-associated beta subunit and a small pyruvoyl-containing alpha subunit. The cofactor is pyruvate. In terms of processing, is synthesized initially as an inactive proenzyme. Formation of the active enzyme involves a self-maturation process in which the active site pyruvoyl group is generated from an internal serine residue via an autocatalytic post-translational modification. Two non-identical subunits are generated from the proenzyme in this reaction, and the pyruvate is formed at the N-terminus of the alpha chain, which is derived from the carboxyl end of the proenzyme. The post-translation cleavage follows an unusual pathway, termed non-hydrolytic serinolysis, in which the side chain hydroxyl group of the serine supplies its oxygen atom to form the C-terminus of the beta chain, while the remainder of the serine residue undergoes an oxidative deamination to produce ammonia and the pyruvoyl prosthetic group on the alpha chain.

The protein resides in the cell membrane. It carries out the reaction a 1,2-diacyl-sn-glycero-3-phospho-L-serine + H(+) = a 1,2-diacyl-sn-glycero-3-phosphoethanolamine + CO2. It functions in the pathway phospholipid metabolism; phosphatidylethanolamine biosynthesis; phosphatidylethanolamine from CDP-diacylglycerol: step 2/2. Its function is as follows. Catalyzes the formation of phosphatidylethanolamine (PtdEtn) from phosphatidylserine (PtdSer). In Rhizobium rhizogenes (strain K84 / ATCC BAA-868) (Agrobacterium radiobacter), this protein is Phosphatidylserine decarboxylase proenzyme.